Consider the following 217-residue polypeptide: Protein-L-isoaspartate O-methyltransferase (217 aa).

Ser-61 is a catalytic residue.

The protein belongs to the methyltransferase superfamily. L-isoaspartyl/D-aspartyl protein methyltransferase family.

The protein resides in the cytoplasm. The enzyme catalyses [protein]-L-isoaspartate + S-adenosyl-L-methionine = [protein]-L-isoaspartate alpha-methyl ester + S-adenosyl-L-homocysteine. In terms of biological role, catalyzes the methyl esterification of L-isoaspartyl residues in peptides and proteins that result from spontaneous decomposition of normal L-aspartyl and L-asparaginyl residues. It plays a role in the repair and/or degradation of damaged proteins. This Brucella anthropi (strain ATCC 49188 / DSM 6882 / CCUG 24695 / JCM 21032 / LMG 3331 / NBRC 15819 / NCTC 12168 / Alc 37) (Ochrobactrum anthropi) protein is Protein-L-isoaspartate O-methyltransferase.